The chain runs to 563 residues: uncharacterized protein (563 aa).

Over 1–13 (MASRSCICQVSAG) the chain is Cytoplasmic. A helical membrane pass occupies residues 14–34 (IIFLIGAALLVAGLVIVLNVF). Over 35–528 (PNIVNNQIND…LFTPVSTVNT (494 aa)) the chain is Lumenal. 8 N-linked (GlcNAc...) asparagine glycosylation sites follow: asparagine 43, asparagine 112, asparagine 133, asparagine 188, asparagine 265, asparagine 295, asparagine 315, and asparagine 502. The helical transmembrane segment at 529 to 549 (ICWIAVGLGAGLIALSIVMVI) threads the bilayer. Topologically, residues 550 to 563 (VSFCCFRDEHHKTS) are cytoplasmic.

It belongs to the CD36 family.

The protein resides in the membrane. This is an uncharacterized protein from Caenorhabditis elegans.